An 809-amino-acid polypeptide reads, in one-letter code: RNA-directed RNA polymerase (809 aa).

In terms of assembly, forms a ribonucleoprotein complex with the viral RNA. Since the viral RNA is not encapsidated, ribonucleoprotein complex formation appears to be the strategy to survive in the host as persistent virus.

The protein localises to the host mitochondrion. It carries out the reaction RNA(n) + a ribonucleoside 5'-triphosphate = RNA(n+1) + diphosphate. RNA-directed RNA polymerase that replicates the viral (+) and (-) genome. The polypeptide is RNA-directed RNA polymerase (Cryphonectria parasitica mitovirus 1 (strain American chestnut tree/New Jersey/NB631) (CMV1)).